The following is a 234-amino-acid chain: Leucyl/phenylalanyl-tRNA--protein transferase (234 aa).

Belongs to the L/F-transferase family.

It localises to the cytoplasm. The enzyme catalyses N-terminal L-lysyl-[protein] + L-leucyl-tRNA(Leu) = N-terminal L-leucyl-L-lysyl-[protein] + tRNA(Leu) + H(+). It carries out the reaction N-terminal L-arginyl-[protein] + L-leucyl-tRNA(Leu) = N-terminal L-leucyl-L-arginyl-[protein] + tRNA(Leu) + H(+). It catalyses the reaction L-phenylalanyl-tRNA(Phe) + an N-terminal L-alpha-aminoacyl-[protein] = an N-terminal L-phenylalanyl-L-alpha-aminoacyl-[protein] + tRNA(Phe). Its function is as follows. Functions in the N-end rule pathway of protein degradation where it conjugates Leu, Phe and, less efficiently, Met from aminoacyl-tRNAs to the N-termini of proteins containing an N-terminal arginine or lysine. This Salmonella agona (strain SL483) protein is Leucyl/phenylalanyl-tRNA--protein transferase.